A 1798-amino-acid chain; its full sequence is Focadhesin (1798 aa).

Lys816 is subject to N6-acetyllysine.

As to quaternary structure, interacts with VCL. Expressed by glial and neuronal cells in brain.

The protein localises to the cell junction. It is found in the focal adhesion. It localises to the cytoplasm. Its subcellular location is the cytosol. Functionally, required for the maintenance of SKIC2 and SKIC3 proteostatic levels in the liver. May be involved in the regulation of RNA degradation by the exosome complex. Potential tumor suppressor in gliomas. This chain is Focadhesin (Focad), found in Mus musculus (Mouse).